The primary structure comprises 821 residues: LPS-assembly protein LptD (821 aa).

A signal peptide spans 1–20 (MGKRLFWTALSGLMVSAAHA).

This sequence belongs to the LptD family. Component of the lipopolysaccharide transport and assembly complex. Interacts with LptE and LptA.

The protein localises to the cell outer membrane. Together with LptE, is involved in the assembly of lipopolysaccharide (LPS) at the surface of the outer membrane. This is LPS-assembly protein LptD from Chromohalobacter salexigens (strain ATCC BAA-138 / DSM 3043 / CIP 106854 / NCIMB 13768 / 1H11).